A 288-amino-acid polypeptide reads, in one-letter code: S-methyl-5'-thioadenosine phosphorylase (288 aa).

Phosphate contacts are provided by residues Ser-12, Arg-54–His-55, and Ser-87–Ala-88. Met-186 lines the substrate pocket. Thr-187 is a binding site for phosphate. Asp-210–Asp-212 is a substrate binding site.

It belongs to the PNP/MTAP phosphorylase family. MTAP subfamily. Homohexamer. Dimer of a homotrimer.

The enzyme catalyses S-methyl-5'-thioadenosine + phosphate = 5-(methylsulfanyl)-alpha-D-ribose 1-phosphate + adenine. The protein operates within amino-acid biosynthesis; L-methionine biosynthesis via salvage pathway; S-methyl-5-thio-alpha-D-ribose 1-phosphate from S-methyl-5'-thioadenosine (phosphorylase route): step 1/1. Functionally, catalyzes the reversible phosphorylation of S-methyl-5'-thioadenosine (MTA) to adenine and 5-methylthioribose-1-phosphate. Involved in the breakdown of MTA, a major by-product of polyamine biosynthesis. Responsible for the first step in the methionine salvage pathway after MTA has been generated from S-adenosylmethionine. Has broad substrate specificity with 6-aminopurine nucleosides as preferred substrates. The polypeptide is S-methyl-5'-thioadenosine phosphorylase (Chloroflexus aurantiacus (strain ATCC 29366 / DSM 635 / J-10-fl)).